The primary structure comprises 133 residues: Small ribosomal subunit protein uS15 (133 aa).

Belongs to the universal ribosomal protein uS15 family. In terms of assembly, part of the 30S ribosomal subunit.

This is Small ribosomal subunit protein uS15 from Methanosphaera stadtmanae (strain ATCC 43021 / DSM 3091 / JCM 11832 / MCB-3).